The sequence spans 472 residues: Pentatricopeptide repeat-containing protein At5g46100 (472 aa).

PPR repeat units follow at residues 50–84 (DQSS…NCVV), 85–119 (SEDI…DCDP), 120–154 (SQKA…GLPP), 155–190 (TVAS…GCDP), 191–225 (DSYT…DCAP), 226–260 (TVVT…GIEP), 261–295 (NVFT…GCRP), 296–330 (NMVT…GLKP), 331–365 (DAGL…GITP), 373–406 (HVKT…GISV), and 407–441 (EVET…GCIP).

This sequence belongs to the PPR family. P subfamily.

This is Pentatricopeptide repeat-containing protein At5g46100 from Arabidopsis thaliana (Mouse-ear cress).